We begin with the raw amino-acid sequence, 502 residues long: L-arabinose isomerase (502 aa).

Mn(2+) is bound by residues Glu-306, Glu-333, His-350, and His-449.

This sequence belongs to the arabinose isomerase family. It depends on Mn(2+) as a cofactor.

The catalysed reaction is beta-L-arabinopyranose = L-ribulose. The protein operates within carbohydrate degradation; L-arabinose degradation via L-ribulose; D-xylulose 5-phosphate from L-arabinose (bacterial route): step 1/3. Catalyzes the conversion of L-arabinose to L-ribulose. This Flavobacterium johnsoniae (strain ATCC 17061 / DSM 2064 / JCM 8514 / BCRC 14874 / CCUG 350202 / NBRC 14942 / NCIMB 11054 / UW101) (Cytophaga johnsonae) protein is L-arabinose isomerase.